The following is a 954-amino-acid chain: Protein teashirt (954 aa).

3 disordered regions span residues 20–91, 167–207, and 276–331; these read LPTA…SLPS, ESAE…PQLG, and VKGG…GSGA. The segment covering 47 to 57 has biased composition (gly residues); the sequence is HGGGAGSGGVG. Polar residues predominate over residues 292 to 303; sequence SKATTPQAASQP. Residues 318–328 show a composition bias toward gly residues; the sequence is SGGGSGGGAAG. A C2H2-type 1 zinc finger spans residues 354-378; sequence FRCVWCKQSFPTLEALTTHMKDSKH. The segment at 383-444 is disordered; that stretch reads VPPFGNLPSN…YRGDPPTPLP (62 aa). Positions 417 to 428 are enriched in low complexity; sequence SGSASNHSPSAN. C2H2-type zinc fingers lie at residues 466–490 and 533–557; these read LKCMRCGESFRSLGEMTKHMQETQH and LTCKVCDKAFNSLGDLSNHMAKNNH. Disordered regions lie at residues 563 to 622, 689 to 714, and 748 to 935; these read LQSA…DKND, FDTPPRHASLPASSPSNSSTKNTSPV, and TSSE…NLTA. Basic residues predominate over residues 568–578; it reads ARKRPAPKKRE. A compositionally biased stretch (basic and acidic residues) spans 579–588; that stretch reads KSLPVRKLLE. The span at 696–712 shows a compositional bias: low complexity; it reads ASLPASSPSNSSTKNTS. Residues S750 and S758 each carry the phosphoserine modification. Residues 778-807 are compositionally biased toward basic and acidic residues; it reads GHDEESSKPAIKQEREAESKPVKMEIKSEF. Residues 842–851 show a composition bias toward low complexity; sequence PKTPSSAASP. 2 stretches are compositionally biased toward polar residues: residues 862 to 885 and 893 to 907; these read AESQRSVTPKSPASSHKSYDGSSE and DSLNALSSMFDSLGS. Over residues 910-926 the composition is skewed to low complexity; that stretch reads AGANSRAKLAAAAAAGG.

The protein belongs to the teashirt C2H2-type zinc-finger protein family. Binds arm. As to expression, shows a dynamic expression pattern during embryogenesis. Expressed in the embryonic trunk region (PS 3-13) with expression strongest in the thoracic segments. Expressed in a small group of cells corresponding to the anal tuft from stage 14. Strongly expressed in the embryonic ventral nerve cord. Also expressed in the proximal domain of the leg imaginal disk and in the region of the wing disk that will give rise to the proximal wing hinge. Expressed at high levels in the anterior and central embryonic midgut mesoderm and in the embryonic midgut endoderm. Expressed at a low level in more posterior visceral mesoderm of the gut. From stage 12 onwards, tsh and tio are colocalized in some cells of the CNS, trunk epidermis, hindgut and Malpighian tubules.

It localises to the nucleus. The protein resides in the cytoplasm. In terms of biological role, homeotic protein that acts downstream of Arm in the Wg cascade during embryogenesis to determine segment identity throughout the entire trunk. Acts cooperatively with other trunk homeotic proteins to repress head homeotic genes and therefore repress head segmental identity. Necessary, in combination with Scr, for the formation of the prothoracic segment. Promotes eye development in the dorsal region of the eye disk and suppresses eye development in the ventral region in combination with Wg-signaling and several early dorso-ventral eye patterning genes. Required for proper development of proximal leg segments. Has differential functions along the dorso-ventral axs of the antennal and leg disks. May play a role in wing hinge development. Possible involvement in chromatin structure for modulation of transcription. Binds DNA and can act as both a transcriptional repressor and activator. Positively regulates its own expression as well as that of Dll. Negatively regulates the expression of mod. Required for Wg-mediated transcriptional repression of Ubx in the midgut. Also represses transcription of lab in the midgut and is necessary for the proper formation of anterior and central midgut structures. Tiptop (tio) and teashirt (tsh) have, on the whole, common activities. Tio and tsh repress each other's expression and tsh has a crucial role for trunk patterning that is in part masked by ectopic expression of tiptop. Both genes share a common activity required for the activation of Ser and svb and the maintenance of en and wg. The protein is Protein teashirt (tsh) of Drosophila melanogaster (Fruit fly).